Reading from the N-terminus, the 424-residue chain is FeMo cofactor biosynthesis protein NifB (424 aa).

In terms of domain architecture, Radical SAM core spans 12-261 (NDSSRHTYGR…PQMKHCARCR (250 aa)). Residues C30, C34, and C37 each contribute to the [4Fe-4S] cluster site. 3 residues coordinate S-adenosyl-L-methionine: G84, T136, and V188. Positions 257 and 260 each coordinate [4Fe-4S] cluster.

This sequence belongs to the radical SAM superfamily. NifB family. Monomer. The cofactor is [4Fe-4S] cluster.

The protein operates within cofactor biosynthesis; Fe-Mo cofactor biosynthesis. In terms of biological role, involved in the biosynthesis of the iron-molybdenum cofactor (FeMo-co or M-cluster) found in the dinitrogenase enzyme of the nitrogenase complex in nitrogen-fixing microorganisms. NifB catalyzes the crucial step of radical SAM-dependent carbide insertion that occurs concomitant with the insertion of a 9th sulfur and the rearrangement/coupling of two [4Fe-4S] clusters into a [8Fe-9S-C] cluster, the precursor to the M-cluster. The polypeptide is FeMo cofactor biosynthesis protein NifB (Chlorobaculum tepidum (strain ATCC 49652 / DSM 12025 / NBRC 103806 / TLS) (Chlorobium tepidum)).